We begin with the raw amino-acid sequence, 594 residues long: Type I restriction enzyme EcoEI specificity subunit (594 aa).

This sequence belongs to the type-I restriction system S methylase family. In terms of assembly, the type I restriction/modification system is composed of three polypeptides R, M and S; the restriction enzyme has stoichiometry R(2)M(2)S(1) while the methyltransferase is M(2)S(1).

The specificity (S) subunit of a type I restriction enzyme; this subunit dictates DNA sequence specificity. The M and S subunits together form a methyltransferase (MTase) that methylates two adenine residues of the sequence 5'-GAGN(7)ATGC-3'. In the presence of the R subunit the complex can also act as an endonuclease, binding to the same target sequence but cutting the DNA some distance from this site. Whether the DNA is cut or modified depends on the methylation state of the target sequence. When the target site is unmodified, the DNA is cut. When the target site is hemimethylated, the complex acts as a maintenance MTase modifying the DNA so that both strands become methylated. After locating a non-methylated recognition site, the enzyme complex serves as a molecular motor that translocates DNA in an ATP-dependent manner until a collision occurs that triggers cleavage. The chain is Type I restriction enzyme EcoEI specificity subunit from Escherichia coli.